Reading from the N-terminus, the 166-residue chain is Crossover junction endodeoxyribonuclease RuvC (166 aa).

Catalysis depends on residues Asp-7, Glu-68, and Asp-141. The Mg(2+) site is built by Asp-7, Glu-68, and Asp-141.

The protein belongs to the RuvC family. As to quaternary structure, homodimer which binds Holliday junction (HJ) DNA. The HJ becomes 2-fold symmetrical on binding to RuvC with unstacked arms; it has a different conformation from HJ DNA in complex with RuvA. In the full resolvosome a probable DNA-RuvA(4)-RuvB(12)-RuvC(2) complex forms which resolves the HJ. Mg(2+) serves as cofactor.

The protein resides in the cytoplasm. It carries out the reaction Endonucleolytic cleavage at a junction such as a reciprocal single-stranded crossover between two homologous DNA duplexes (Holliday junction).. In terms of biological role, the RuvA-RuvB-RuvC complex processes Holliday junction (HJ) DNA during genetic recombination and DNA repair. Endonuclease that resolves HJ intermediates. Cleaves cruciform DNA by making single-stranded nicks across the HJ at symmetrical positions within the homologous arms, yielding a 5'-phosphate and a 3'-hydroxyl group; requires a central core of homology in the junction. The consensus cleavage sequence is 5'-(A/T)TT(C/G)-3'. Cleavage occurs on the 3'-side of the TT dinucleotide at the point of strand exchange. HJ branch migration catalyzed by RuvA-RuvB allows RuvC to scan DNA until it finds its consensus sequence, where it cleaves and resolves the cruciform DNA. This is Crossover junction endodeoxyribonuclease RuvC from Caldicellulosiruptor saccharolyticus (strain ATCC 43494 / DSM 8903 / Tp8T 6331).